Reading from the N-terminus, the 463-residue chain is Na(+)/H(+) antiporter NhaA 3 (463 aa).

The next 11 helical transmembrane spans lie at 28-48 (FLATEAGGAVLLLLAAVAALL), 79-99 (LHHWVNDGAMAIFFAVVGLEI), 114-134 (IAVPALGAIGGLILPAAIYFV), 144-164 (GWGIPMSTDTAFVIGILALFG), 173-193 (LFLLTLAIVDDIGAITVVGIF), 196-216 (DHLNPVGLAVAGATVLAILGL), 232-252 (LVLWGAIHVSGVHATLAGVLV), 305-325 (VLHPISAFVVVPVFGLANAGV), 344-364 (VAAALIAGNACGISVAGVAAI), 377-397 (YGHLLGAATLAGIGFTISLFI), and 413-433 (IGILAGSLVAALAGTVILRVL). The segment at 444–463 (TDEPVPRLPPRPWRAPVPAK) is disordered. Residues 449 to 463 (PRLPPRPWRAPVPAK) are compositionally biased toward pro residues.

This sequence belongs to the NhaA Na(+)/H(+) (TC 2.A.33) antiporter family.

The protein localises to the cell membrane. The catalysed reaction is Na(+)(in) + 2 H(+)(out) = Na(+)(out) + 2 H(+)(in). In terms of biological role, na(+)/H(+) antiporter that extrudes sodium in exchange for external protons. In Frankia alni (strain DSM 45986 / CECT 9034 / ACN14a), this protein is Na(+)/H(+) antiporter NhaA 3.